The primary structure comprises 711 residues: DNA ligase (711 aa).

The disordered stretch occupies residues 1-21 (MNATHRGAQADASAPAGGLPP). Over residues 10–21 (ADASAPAGGLPP) the composition is skewed to low complexity. NAD(+) is bound by residues 52–56 (DAEYD), 101–102 (SL), and E146. The active-site N6-AMP-lysine intermediate is K148. NAD(+)-binding residues include R169, E205, K322, and K346. 4 residues coordinate Zn(2+): C440, C443, C458, and C464. The BRCT domain maps to 623–711 (RAPAPLAGKT…VGAGQPGEQS (89 aa)).

It belongs to the NAD-dependent DNA ligase family. LigA subfamily. It depends on Mg(2+) as a cofactor. The cofactor is Mn(2+).

The enzyme catalyses NAD(+) + (deoxyribonucleotide)n-3'-hydroxyl + 5'-phospho-(deoxyribonucleotide)m = (deoxyribonucleotide)n+m + AMP + beta-nicotinamide D-nucleotide.. In terms of biological role, DNA ligase that catalyzes the formation of phosphodiester linkages between 5'-phosphoryl and 3'-hydroxyl groups in double-stranded DNA using NAD as a coenzyme and as the energy source for the reaction. It is essential for DNA replication and repair of damaged DNA. This chain is DNA ligase, found in Cupriavidus pinatubonensis (strain JMP 134 / LMG 1197) (Cupriavidus necator (strain JMP 134)).